The sequence spans 277 residues: Large ribosomal subunit protein uL2m (277 aa).

The tract at residues alanine 225 to arginine 263 is disordered. The span at threonine 248–threonine 259 shows a compositional bias: polar residues.

The protein belongs to the universal ribosomal protein uL2 family.

It is found in the mitochondrion. This is Large ribosomal subunit protein uL2m (RPL2) from Reclinomonas americana.